The primary structure comprises 289 residues: uncharacterized protein (289 aa).

E48 is an active-site residue.

It belongs to the PhzF family.

This is an uncharacterized protein from Pasteurella multocida (strain Pm70).